The sequence spans 332 residues: Fructose-1,6-bisphosphatase class 1 (332 aa).

Mg(2+) contacts are provided by Glu89, Asp110, Leu112, and Asp113. Substrate is bound by residues Asp113 to Ser116, Asn206, Tyr239, Tyr257 to Tyr259, and Lys269. Mg(2+) is bound at residue Glu275.

The protein belongs to the FBPase class 1 family. In terms of assembly, homotetramer. Mg(2+) serves as cofactor.

It is found in the cytoplasm. The catalysed reaction is beta-D-fructose 1,6-bisphosphate + H2O = beta-D-fructose 6-phosphate + phosphate. It functions in the pathway carbohydrate biosynthesis; gluconeogenesis. The polypeptide is Fructose-1,6-bisphosphatase class 1 (Klebsiella pneumoniae subsp. pneumoniae (strain ATCC 700721 / MGH 78578)).